We begin with the raw amino-acid sequence, 673 residues long: Polyunsaturated fatty acid 5-lipoxygenase (673 aa).

The PLAT domain maps to P2–K117. G17, T18, D19, N44, D45, E47, D79, and D80 together coordinate Ca(2+). Residues L118 to I673 form the Lipoxygenase domain. S271 bears the Phosphoserine mark. Residues H367 and H372 each coordinate Fe cation. S523 carries the phosphoserine modification. Fe cation is bound by residues H550, N554, and I673.

It belongs to the lipoxygenase family. In terms of assembly, homodimer. Interacts with ALOX5AP and LTC4S. Interacts with COTL1, the interaction is required for stability and efficient catalytic activity. Interacts with PIK3R1; this interaction bridges ALOX5 with CD40 after CD40 ligation in B cells and leads to the production of reactive oxygen species (ROS). Interacts (via PLAT domain) with DICER1 (via Dicer dsRNA-binding fold domain); this interaction enhances arachidonate 5-lipoxygenase activity and modifies the miRNA precursor processing activity of DICER1. Fe cation serves as cofactor. Serine phosphorylation by MAPKAPK2 is stimulated by arachidonic acid. Phosphorylation on Ser-523 by PKA has an inhibitory effect. Phosphorylation on Ser-271 prevents export from the nucleus. Phosphorylation at Ser-523 is stimulated by 8-bromo-3',5'-cyclic AMP or prostaglandin E2.

It is found in the cytoplasm. It localises to the nucleus matrix. The protein localises to the nucleus membrane. Its subcellular location is the perinuclear region. The protein resides in the cytosol. It is found in the nucleus envelope. It localises to the nucleus intermembrane space. The catalysed reaction is (5Z,8Z,11Z,14Z)-eicosatetraenoate + O2 = leukotriene A4 + H2O. It carries out the reaction 18-HEPE + O2 = (5S)-hydroperoxy-18-hydroxy-(7E,9E,11Z,14Z,16E)-eicosapentaenoate. It catalyses the reaction (18R)-hydroxy-(5Z,8Z,11Z,14Z,16E)-eicosapentaenoate + O2 = (5S)-hydroperoxy-(18R)-hydroxy-(6E,8Z,11Z,14Z,16E)-eicosapentaenoate. The enzyme catalyses (18S)-hydroxy-(5Z,8Z,11Z,14Z,16E)-eicosapentaenoate + O2 = (5S)-hydroperoxy-(18S)-hydroxy-(6E,8Z,11Z,14Z,16E)-eicosapentaenoate. The catalysed reaction is (5S)-hydroperoxy-(18S)-hydroxy-(6E,8Z,11Z,14Z,16E)-eicosapentaenoate = (5S,6S)-epoxy-(18S)-hydroxy-(7E,9E,11Z,14Z,16E)-eicosapentaenoate + H2O. It carries out the reaction (5S)-hydroperoxy-(18R)-hydroxy-(6E,8Z,11Z,14Z,16E)-eicosapentaenoate = (5S,6S)-epoxy-(18R)-hydroxy-(7E,9E,11Z,14Z,16E)-eicosapentaenoate + H2O. It catalyses the reaction (5S)-hydroperoxy-18-hydroxy-(7E,9E,11Z,14Z,16E)-eicosapentaenoate = (5S,6S)-epoxy-18-hydroxy-(7E,9E,11Z,14Z,16E)-eicosapentaenoate + H2O. The enzyme catalyses (5Z,8Z,11Z,14Z)-eicosatetraenoate + O2 = (5S)-hydroperoxy-(6E,8Z,11Z,14Z)-eicosatetraenoate. The catalysed reaction is (15S)-hydroxy-(5Z,8Z,11Z,13E)-eicosatetraenoate + O2 = (5S)-hydroperoxy-(15S)-hydroxy-(6E,8Z,11Z,13E)-eicosatetraenoate. It carries out the reaction (5S)-hydroperoxy-(6E,8Z,11Z,14Z)-eicosatetraenoate = leukotriene A4 + H2O. It catalyses the reaction (5Z,8Z,11Z,14Z)-eicosatetraenoate + O2 = (8S)-hydroperoxy-(5Z,9E,11Z,14Z)-eicosatetraenoate. The enzyme catalyses (5Z,8Z,11Z,14Z)-eicosatetraenoate + O2 = (12S)-hydroperoxy-(5Z,8Z,10E,14Z)-eicosatetraenoate. The catalysed reaction is (5Z,8Z)-eicosadienoate + O2 = (5S)-hydroperoxy-(6E,8Z)-eicosadienoate. It carries out the reaction (12S)-hydroxy-(5Z,8Z,10E,14Z)-eicosatetraenoate + O2 = (5S)-hydroperoxy-(12S)-hydroxy-(6E,8Z,10E,14Z)-eicosatetraenoate. It catalyses the reaction (5Z,8Z,11Z,14Z,17Z)-eicosapentaenoate + O2 = 5-hydroperoxy-(6E,8Z,11Z,14Z,17Z)-eicosapentaenoate. The enzyme catalyses (4Z,7Z,10Z,13Z,16Z,19Z)-docosahexaenoate + O2 = (14S)-hydroperoxy-(4Z,7Z,10Z,12E,16Z,19Z)-docosahexaenoate. The catalysed reaction is (4Z,7Z,10Z,13Z,16Z,19Z)-docosahexaenoate + O2 = (7S)-hydroperoxy-(4Z,8E,10Z,13Z,16Z,19Z)-docosahexaenoate. It carries out the reaction (4Z,7Z,10Z,13Z,16Z,19Z)-docosahexaenoate + O2 = (17S)-hydroperoxy-(4Z,7Z,10Z,13Z,15E,19Z)-docosahexaenoate. Its pathway is lipid metabolism; leukotriene A4 biosynthesis. Catalyzes the oxygenation of arachidonate to 5-hydroperoxyeicosatetraenoate (5-HPETE) followed by the dehydration to 5,6- epoxyeicosatetraenoate (Leukotriene A4/LTA4), the first two steps in the biosynthesis of leukotrienes, which are potent mediators of inflammation. Also catalyzes the oxygenation of arachidonate into 8-hydroperoxyicosatetraenoate (8-HPETE) and 12-hydroperoxyicosatetraenoate (12-HPETE). Displays lipoxin synthase activity being able to convert (15S)-HETE into a conjugate tetraene. Although arachidonate is the preferred substrate, this enzyme can also metabolize oxidized fatty acids derived from arachidonate such as (15S)-HETE, eicosapentaenoate (EPA) such as (18R)- and (18S)-HEPE or docosahexaenoate (DHA) which lead to the formation of specialized pro-resolving mediators (SPM) lipoxin and resolvins E and D respectively, therefore it participates in anti-inflammatory responses. Oxidation of DHA directly inhibits endothelial cell proliferation and sprouting angiogenesis via peroxisome proliferator-activated receptor gamma (PPARgamma). It does not catalyze the oxygenation of linoleic acid and does not convert (5S)-HETE to lipoxin isomers. In addition to inflammatory processes, it participates in dendritic cell migration, wound healing through an antioxidant mechanism based on heme oxygenase-1 (HO-1) regulation expression, monocyte adhesion to the endothelium via ITGAM expression on monocytes. Moreover, it helps establish an adaptive humoral immunity by regulating primary resting B cells and follicular helper T cells and participates in the CD40-induced production of reactive oxygen species (ROS) after CD40 ligation in B cells through interaction with PIK3R1 that bridges ALOX5 with CD40. May also play a role in glucose homeostasis, regulation of insulin secretion and palmitic acid-induced insulin resistance via AMPK. Can regulate bone mineralization and fat cell differentiation increases in induced pluripotent stem cells. This Mesocricetus auratus (Golden hamster) protein is Polyunsaturated fatty acid 5-lipoxygenase.